A 383-amino-acid chain; its full sequence is Acetylornithine deacetylase (383 aa).

H80 lines the Zn(2+) pocket. The active site involves D82. Residue D112 coordinates Zn(2+). E144 is a catalytic residue. The Zn(2+) site is built by E145, E169, and H355.

Belongs to the peptidase M20A family. ArgE subfamily. As to quaternary structure, homodimer. The cofactor is Zn(2+). Requires Co(2+) as cofactor. Glutathione serves as cofactor.

The protein localises to the cytoplasm. The catalysed reaction is N(2)-acetyl-L-ornithine + H2O = L-ornithine + acetate. The protein operates within amino-acid biosynthesis; L-arginine biosynthesis; L-ornithine from N(2)-acetyl-L-ornithine (linear): step 1/1. Catalyzes the hydrolysis of the amide bond of N(2)-acetylated L-amino acids. Cleaves the acetyl group from N-acetyl-L-ornithine to form L-ornithine, an intermediate in L-arginine biosynthesis pathway, and a branchpoint in the synthesis of polyamines. This chain is Acetylornithine deacetylase, found in Pectobacterium atrosepticum (strain SCRI 1043 / ATCC BAA-672) (Erwinia carotovora subsp. atroseptica).